A 685-amino-acid chain; its full sequence is Serotransferrin (685 aa).

A signal peptide spans 1–16; the sequence is MKPLLLLPLLGCLATI. 2 Transferrin-like domains span residues 23–329 and 340–666; these read VKWC…ALKI and MKWC…SLRT. The cysteines at positions 26 and 48 are disulfide-linked. Residues Asp-72 and Tyr-102 each contribute to the Fe(3+) site. Disulfide bonds link Cys-125-Cys-206, Cys-170-Cys-184, and Cys-234-Cys-248. 4 residues coordinate hydrogencarbonate: Thr-127, Lys-131, Ala-133, and Gly-134. Position 200 (Tyr-200) interacts with Fe(3+). His-256 provides a ligand contact to Fe(3+). 2 disulfide bridges follow: Cys-343-Cys-379 and Cys-353-Cys-370. Fe(3+)-binding residues include Asp-394 and Tyr-428. Disulfide bonds link Cys-404/Cys-678, Cys-419/Cys-639, Cys-451/Cys-526, Cys-475/Cys-667, Cys-485/Cys-499, Cys-496/Cys-509, and Cys-566/Cys-580. Positions 453, 457, 459, and 460 each coordinate hydrogencarbonate. N-linked (GlcNAc...) asparagine glycosylation occurs at Asn-476. Position 520 (Tyr-520) interacts with Fe(3+). Fe(3+) is bound at residue His-588.

It belongs to the transferrin family. Monomer.

Its subcellular location is the secreted. Transferrins are iron binding transport proteins which can bind two Fe(3+) ions in association with the binding of an anion, usually bicarbonate. The sequence is that of Serotransferrin (tf) from Paralichthys olivaceus (Bastard halibut).